Consider the following 177-residue polypeptide: Trafficking regulator of GLUT4 1 (177 aa).

At 1-105 the chain is on the cytoplasmic side; it reads MAHPVQSEFP…QDQEAPRDYL (105 aa). Serine 48, serine 87, and serine 88 each carry phosphoserine. Residues 71-92 form a disordered region; sequence EAPLPRSPSRASSRRASSIATT. Over residues 72 to 88 the composition is skewed to low complexity; sequence APLPRSPSRASSRRASS. Positions 106–126 form an intramembrane region, helical; it reads ILAVVACFCPVWPLNLIPLII. At 127-153 the chain is on the cytoplasmic side; sequence SIMSRSSMQQGNVDGARRLGRLARLLS. Residues 154 to 174 traverse the membrane as a helical segment; the sequence is ITLIIMGIVIIMVAVTVNFTV. Residues 175-177 lie on the Extracellular side of the membrane; sequence QKK.

It belongs to the CD225/Dispanin family. In terms of assembly, interacts with SLC2A4; the interaction is required for proper SLC2A4 reacycling after insulin stimulation. Expressed at high levels in heart, mammary gland, adrenal gland, stomach, smooth muscle and skeletal muscle, and at lower levels in brain and lung. Strongly down-regulated in lung cancer tissues, due to hypermethylation of the corresponding locus. Expressed in adipose tissue.

The protein resides in the cell membrane. The protein localises to the endomembrane system. Its subcellular location is the cytoplasm. It is found in the perinuclear region. Its function is as follows. Regulates insulin-mediated adipose tissue glucose uptake and transport by modulation of SLC2A4 recycling. Not required for SLC2A4 membrane fusion upon an initial stimulus, but rather is necessary for proper protein recycling during prolonged insulin stimulation. This chain is Trafficking regulator of GLUT4 1, found in Homo sapiens (Human).